A 391-amino-acid polypeptide reads, in one-letter code: Phosphoglycerate kinase (391 aa).

Substrate contacts are provided by residues 21-23 (DLN), Arg36, 59-62 (HLGR), Arg113, and Arg146. ATP-binding positions include Lys197, Glu319, and 345–348 (GGDT).

It belongs to the phosphoglycerate kinase family. In terms of assembly, monomer.

It localises to the cytoplasm. It catalyses the reaction (2R)-3-phosphoglycerate + ATP = (2R)-3-phospho-glyceroyl phosphate + ADP. It participates in carbohydrate degradation; glycolysis; pyruvate from D-glyceraldehyde 3-phosphate: step 2/5. The sequence is that of Phosphoglycerate kinase from Xanthomonas axonopodis pv. citri (strain 306).